The following is a 340-amino-acid chain: MAASEEELLLPRLPELFETSKKLLEELEVATEPTGSRTIQDKVSKGLELLEKAAGMLSQLDLFSRNEDLEEIASIDLKYLMVPALQGALTMKQVNPSKRLDHLQRAREHFIHFLTQCHCYHVAEFQLPQTKNNSAENNTARSSMAYPNLVAMASQRQAKIERYKQKKEVEHRLSALKSAVESGQADDERVREYYLLHLRRWIGISLEEIESIDQEIKILKDKDSPREESACQSSLPEKPPMKPFILTRNKAQAKVFGTGYPSLATMTVSDWYEQHQKYGALPDRGIAKPPSADFQRAAQQQEDQEQKDEENEEKALHRMREWDDWKDTHPRGYGNRQNMG.

A UIM domain is found at 47–61; sequence LELLEKAAGMLSQLD. The tract at residues 99–203 is interaction with PPP2CA; the sequence is RLDHLQRARE…YLLHLRRWIG (105 aa). 2 disordered regions span residues 221–242 and 281–340; these read DKDS…PPMK and LPDR…QNMG. Residues 226-291 form an interaction with MID1 region; the sequence is REESACQSSL…PDRGIAKPPS (66 aa). Lys-242 carries the N6-acetyllysine modification. Low complexity predominate over residues 292-301; it reads ADFQRAAQQQ. Positions 302 to 312 are enriched in acidic residues; that stretch reads EDQEQKDEENE. Residues 313-330 show a composition bias toward basic and acidic residues; sequence EKALHRMREWDDWKDTHP.

The protein belongs to the IGBP1/TAP42 family. In terms of assembly, interacts with partially folded PPP2CA, but not with the fully active protein. Interacts with PPP2CB, and with PP4 and PP6. Interacts with MID1 and MID2. Interacts with ubiquitin. Phosphorylated. Post-translationally, monoubiquitination by MID1 triggers calpain-mediated cleavage and switches IGBP1 activity from protective to destructive.

The protein resides in the cytoplasm. In terms of biological role, associated to surface IgM-receptor; may be involved in signal transduction. Involved in regulation of the catalytic activity of the phosphatases PP2A, PP4 and PP6 by protecting their partially folded catalytic subunits from degradative polyubiquitination until they associate with regulatory subunits. In Rattus norvegicus (Rat), this protein is Immunoglobulin-binding protein 1 (Igbp1).